The chain runs to 196 residues: Adenylyl-sulfate kinase (196 aa).

31 to 38 (GLSGAGKS) contributes to the ATP binding site. Ser-105 acts as the Phosphoserine intermediate in catalysis.

It belongs to the APS kinase family.

The catalysed reaction is adenosine 5'-phosphosulfate + ATP = 3'-phosphoadenylyl sulfate + ADP + H(+). The protein operates within sulfur metabolism; hydrogen sulfide biosynthesis; sulfite from sulfate: step 2/3. Its function is as follows. Catalyzes the synthesis of activated sulfate. This chain is Adenylyl-sulfate kinase, found in Aeromonas salmonicida (strain A449).